A 457-amino-acid chain; its full sequence is Cysteine desulfurase (457 aa).

5 residues coordinate pyridoxal 5'-phosphate: Ala127, Thr128, Gln235, Ser255, and His257. Position 258 is an N6-(pyridoxal phosphate)lysine (Lys258). A pyridoxal 5'-phosphate-binding site is contributed by Thr295. The Cysteine persulfide intermediate role is filled by Cys381. Cys381 contributes to the [2Fe-2S] cluster binding site. Cys381 contacts Zn(2+). At Cys381 the chain carries Cysteine persulfide.

This sequence belongs to the class-V pyridoxal-phosphate-dependent aminotransferase family. NifS/IscS subfamily. Homodimer. Component of the mitochondrial core iron-sulfur cluster (ISC) complex composed of NFS1, LYRM4, NDUFAB1, ISCU, FXN, and FDX2; this complex is a heterohexamer containing two copies of each monomer. Component of cyteine desulfurase complex composed of NFS1, LYRM4 and NDUFAB1; this complex contributes to the activation of cysteine desulfurase activity and NFS1 stabilization. Interacts (homodimer form) with ISCU (D-state); each monomer interacts with the C-terminal regions of each NFS1 monomer. Interacts with HSPA9. Interacts (via homodimer form) with FDX2. Interacts (via homodimer form) with FXN. Interacts with LYRM4. Component of a complex composed of FXN, NFS1, LYRM4 and ISCU. In terms of assembly, monomer. Homodimer. Oligomer. Interacts with ISCU. Component of the cysteine desulfurase complex composed of NFS1 and LYRM4; this complex contributes to the activation of cysteine desulfurase activity. Interacts with MOCS3. The cofactor is pyridoxal 5'-phosphate. Post-translationally, N-gluconoylated. In terms of processing, cysteine persulfide intermediate is reduced by thiol-containing molecules like glutathione and L-cysteine. Persulfide reduction is a rate-limiting step of cysteine desulfurase catalytic cycle. As to expression, predominantly expressed in heart and skeletal muscle. Also found in brain, liver and pancreas.

The protein localises to the mitochondrion. The protein resides in the cytoplasm. It is found in the nucleus. It localises to the cytoskeleton. Its subcellular location is the microtubule organizing center. The protein localises to the centrosome. The enzyme catalyses (sulfur carrier)-H + L-cysteine = (sulfur carrier)-SH + L-alanine. It catalyses the reaction L-cysteinyl-[cysteine desulfurase] + L-cysteine = S-sulfanyl-L-cysteinyl-[cysteine desulfurase] + L-alanine. Its activity is regulated as follows. Active only in complex with LYRM4. In terms of biological role, cysteine desulfurase, of the core iron-sulfur cluster (ISC) assembly complex, that catalyzes the desulfuration of L-cysteine to L-alanine, as component of the cysteine desulfurase complex, leading to the formation of a cysteine persulfide intermediate at the active site cysteine residue and participates in the [2Fe-2S] clusters assembly on the scaffolding protein ISCU. The persulfide is then transferred on the flexible Cys loop from the catalytic site of NFS1 to the surface of NFS1. After the NFS1-linked persulfide sulfur is transferred to one of the conserved Cys residues of the scaffold, a reaction assisted by FXN. The core iron-sulfur cluster (ISC) assembly complex is involved in the de novo synthesis of a [2Fe-2S] cluster, the first step of the mitochondrial iron-sulfur protein biogenesis. This process is initiated by the cysteine desulfurase complex (NFS1:LYRM4:NDUFAB1) that produces persulfide which is delivered on the scaffold protein ISCU in a FXN-dependent manner. Then this complex is stabilized by FDX2 which provides reducing equivalents to accomplish the [2Fe-2S] cluster assembly. Finally, the [2Fe-2S] cluster is transferred from ISCU to chaperone proteins, including HSCB, HSPA9 and GLRX5. Its function is as follows. May catalyze the desulfuration of L-cysteine to L-alanine as component of the cysteine desulfurase complex (NFS1:LYRM4), leading to the formation of a cysteine persulfide intermediate. Acts as a sulfur donor for MOCS3 by transferring the sulfur of the cysteine persulfide intermediate on MOCS3. This is Cysteine desulfurase from Homo sapiens (Human).